A 321-amino-acid chain; its full sequence is Cytochrome f (321 aa).

Positions 1–37 (MKIYRQIKQSFSITKIVFSFFISLLLNLVAQPTICQA) are cleaved as a signal peptide. The heme site is built by F38, C58, C61, and H62. A helical membrane pass occupies residues 287–306 (VQGLIAFFISVVLAQIFLVL).

This sequence belongs to the cytochrome f family. The 4 large subunits of the cytochrome b6-f complex are cytochrome b6, subunit IV (17 kDa polypeptide, petD), cytochrome f and the Rieske protein, while the 4 small subunits are PetG, PetL, PetM and PetN. The complex functions as a dimer. The cofactor is heme.

It localises to the plastid. The protein resides in the cyanelle thylakoid membrane. Functionally, component of the cytochrome b6-f complex, which mediates electron transfer between photosystem II (PSII) and photosystem I (PSI), cyclic electron flow around PSI, and state transitions. The protein is Cytochrome f (petA) of Cyanophora paradoxa.